Consider the following 333-residue polypeptide: Anthranilate phosphoribosyltransferase (333 aa).

Residues glycine 80, 83 to 84 (GD), threonine 88, 90 to 93 (NLST), 108 to 116 (KHGNRSASG), and serine 120 contribute to the 5-phospho-alpha-D-ribose 1-diphosphate site. Glycine 80 serves as a coordination point for anthranilate. Residue serine 92 coordinates Mg(2+). Asparagine 111 lines the anthranilate pocket. Arginine 166 serves as a coordination point for anthranilate. Mg(2+) is bound by residues aspartate 224 and glutamate 225.

It belongs to the anthranilate phosphoribosyltransferase family. Homodimer. Mg(2+) is required as a cofactor.

It carries out the reaction N-(5-phospho-beta-D-ribosyl)anthranilate + diphosphate = 5-phospho-alpha-D-ribose 1-diphosphate + anthranilate. Its pathway is amino-acid biosynthesis; L-tryptophan biosynthesis; L-tryptophan from chorismate: step 2/5. Its function is as follows. Catalyzes the transfer of the phosphoribosyl group of 5-phosphorylribose-1-pyrophosphate (PRPP) to anthranilate to yield N-(5'-phosphoribosyl)-anthranilate (PRA). The chain is Anthranilate phosphoribosyltransferase from Pyrobaculum arsenaticum (strain DSM 13514 / JCM 11321 / PZ6).